The sequence spans 644 residues: 1-deoxy-D-xylulose-5-phosphate synthase (644 aa).

Thiamine diphosphate is bound by residues H78 and 120-122 (GHA). Residue D149 coordinates Mg(2+). Thiamine diphosphate is bound by residues 150-151 (AA), N178, and E373. N178 provides a ligand contact to Mg(2+).

It belongs to the transketolase family. DXPS subfamily. In terms of assembly, homodimer. It depends on Mg(2+) as a cofactor. The cofactor is thiamine diphosphate.

It carries out the reaction D-glyceraldehyde 3-phosphate + pyruvate + H(+) = 1-deoxy-D-xylulose 5-phosphate + CO2. The protein operates within metabolic intermediate biosynthesis; 1-deoxy-D-xylulose 5-phosphate biosynthesis; 1-deoxy-D-xylulose 5-phosphate from D-glyceraldehyde 3-phosphate and pyruvate: step 1/1. In terms of biological role, catalyzes the acyloin condensation reaction between C atoms 2 and 3 of pyruvate and glyceraldehyde 3-phosphate to yield 1-deoxy-D-xylulose-5-phosphate (DXP). The polypeptide is 1-deoxy-D-xylulose-5-phosphate synthase (Chlamydia felis (strain Fe/C-56) (Chlamydophila felis)).